We begin with the raw amino-acid sequence, 249 residues long: Coproheme decarboxylase (249 aa).

Residues Arg-131, Tyr-145–Lys-149, His-172, and Gln-185 each bind Fe-coproporphyrin III. Tyr-145 is an active-site residue.

The protein belongs to the ChdC family. Type 1 subfamily. The cofactor is Fe-coproporphyrin III.

The catalysed reaction is Fe-coproporphyrin III + 2 H2O2 + 2 H(+) = heme b + 2 CO2 + 4 H2O. It catalyses the reaction Fe-coproporphyrin III + H2O2 + H(+) = harderoheme III + CO2 + 2 H2O. The enzyme catalyses harderoheme III + H2O2 + H(+) = heme b + CO2 + 2 H2O. It functions in the pathway porphyrin-containing compound metabolism; protoheme biosynthesis. In terms of biological role, involved in coproporphyrin-dependent heme b biosynthesis. Catalyzes the decarboxylation of Fe-coproporphyrin III (coproheme) to heme b (protoheme IX), the last step of the pathway. The reaction occurs in a stepwise manner with a three-propionate intermediate. The chain is Coproheme decarboxylase from Staphylococcus haemolyticus (strain JCSC1435).